Reading from the N-terminus, the 322-residue chain is Eukaryotic translation initiation factor 3 subunit I (322 aa).

5 WD repeats span residues 4 to 43, 46 to 85, 141 to 180, 184 to 223, and 281 to 322; these read GHER…RLGT, GHQG…VIAS, MVES…KVVD, DHTA…CLKT, and GHFG…NIFE.

The protein belongs to the eIF-3 subunit I family. Component of the eukaryotic translation initiation factor 3 (eIF-3) complex. The eIF-3 complex interacts with pix.

It localises to the cytoplasm. In terms of biological role, component of the eukaryotic translation initiation factor 3 (eIF-3) complex, which is involved in protein synthesis of a specialized repertoire of mRNAs and, together with other initiation factors, stimulates binding of mRNA and methionyl-tRNAi to the 40S ribosome. The eIF-3 complex specifically targets and initiates translation of a subset of mRNAs involved in cell proliferation. The sequence is that of Eukaryotic translation initiation factor 3 subunit I from Drosophila mojavensis (Fruit fly).